Consider the following 602-residue polypeptide: UPF0329 protein ECU02_0060 (602 aa).

Residues E313–S345 show a composition bias toward basic and acidic residues. Positions E313–E407 are disordered. Basic residues predominate over residues K346–K356. Over residues G357–D369 the composition is skewed to basic and acidic residues. The span at R370–V384 shows a compositional bias: acidic residues.

It belongs to the UPF0329 family.

The protein is UPF0329 protein ECU02_0060 of Encephalitozoon cuniculi (strain GB-M1) (Microsporidian parasite).